The sequence spans 265 residues: Putative 2-aminoethylphosphonate transport system permease protein PhnV (265 aa).

Transmembrane regions (helical) follow at residues 13–33 (GVVASVLFIVFFFLPLAVILM), 69–89 (LTIGFCASLFALLCGVWAALA), 104–124 (VFYLPSAIPSVSVGLGILVAF), 131–151 (MNGTLWIVLTAHFVLISAFTF), 185–205 (LPLLMPWMMSALALSLSLSMG), and 233–253 (NIADGAALTIVLVAITLLLMM). The region spanning 65-253 (LLASLTIGFC…LVAITLLLMM (189 aa)) is the ABC transmembrane type-1 domain.

It belongs to the binding-protein-dependent transport system permease family.

Its subcellular location is the cell inner membrane. Its function is as follows. Probably part of the PhnSTUV complex (TC 3.A.1.11.5) involved in 2-aminoethylphosphonate import. Probably responsible for the translocation of the substrate across the membrane. The protein is Putative 2-aminoethylphosphonate transport system permease protein PhnV (phnV) of Salmonella choleraesuis (strain SC-B67).